The following is a 441-amino-acid chain: POC1 centriolar protein homolog A (441 aa).

WD repeat units follow at residues 16-55, 58-97, 100-139, 142-181, 184-223, 226-265, and 268-307; these read GHRDTVTAVDFNANTKQLASGSMDSCLMVWNMKTQMRAYR, GHKDAILSVDFSPSGHLIASASRDKTVRLWVPSVKGESTA, AHTGTVRSVSFSGDGQSLVTASDDKTIKVWTVHRQKFLFS, QHINWVRCAKFSPDGRLIVSASDDKTIKLWDKTSRECIQS, EHGGFVNFVDFHPSGTCIAAAATDNTVKVWDIRMNKLIQH, VHSGVVNSLSFHPSGNYLITASNDSTLKVLDLLEGRLLYT, and GHQGPVTCVKFSREGDFFASGGSDEQVMVWKTNFDAGSYP. The disordered stretch occupies residues 347–376; that stretch reads DLEPHITEMSVKDRSSPLSYTSRSVDQHHP. The segment covering 348–361 has biased composition (basic and acidic residues); sequence LEPHITEMSVKDRS. Positions 400-427 form a coiled coil; that stretch reads LTRTVGILEQRLSLTEDKLKECIEQQQA.

The protein belongs to the WD repeat POC1 family. As to quaternary structure, interacts with pat.

Its subcellular location is the cytoplasm. It localises to the cytoskeleton. May play an important role in centriole assembly and/or stability and ciliogenesis. This Xenopus laevis (African clawed frog) protein is POC1 centriolar protein homolog A (poc1a).